Reading from the N-terminus, the 175-residue chain is Phosphatidylglycerol/phosphatidylinositol transfer protein (175 aa).

The N-terminal stretch at 1 to 21 (MKFLSTAAALLVCLAPVSTTA) is a signal peptide. Positions 22–37 (RSLDFFKSSQSPIQAQ) are excised as a propeptide.

The protein belongs to the NPC2 family. As to quaternary structure, monomer.

The protein resides in the cytoplasm. It is found in the cytoplasmic vesicle. The protein localises to the golgi apparatus. Catalyzes the intermembrane transfer of phosphatidylglycerol and phosphatidylinositol. The protein is Phosphatidylglycerol/phosphatidylinositol transfer protein (pltp) of Aspergillus oryzae (strain ATCC 42149 / RIB 40) (Yellow koji mold).